The primary structure comprises 419 residues: Serine hydroxymethyltransferase (419 aa).

(6S)-5,6,7,8-tetrahydrofolate-binding positions include Leu-118 and 122–124 (GHL). The residue at position 227 (Lys-227) is an N6-(pyridoxal phosphate)lysine.

This sequence belongs to the SHMT family. Homodimer. The cofactor is pyridoxal 5'-phosphate.

Its subcellular location is the cytoplasm. The enzyme catalyses (6R)-5,10-methylene-5,6,7,8-tetrahydrofolate + glycine + H2O = (6S)-5,6,7,8-tetrahydrofolate + L-serine. It participates in one-carbon metabolism; tetrahydrofolate interconversion. It functions in the pathway amino-acid biosynthesis; glycine biosynthesis; glycine from L-serine: step 1/1. In terms of biological role, catalyzes the reversible interconversion of serine and glycine with tetrahydrofolate (THF) serving as the one-carbon carrier. This reaction serves as the major source of one-carbon groups required for the biosynthesis of purines, thymidylate, methionine, and other important biomolecules. Also exhibits THF-independent aldolase activity toward beta-hydroxyamino acids, producing glycine and aldehydes, via a retro-aldol mechanism. The polypeptide is Serine hydroxymethyltransferase (Chloroflexus aurantiacus (strain ATCC 29364 / DSM 637 / Y-400-fl)).